We begin with the raw amino-acid sequence, 604 residues long: UvrABC system protein C (604 aa).

Residues 17–95 (SQPGVYRMLN…IKSLAPRYNI (79 aa)) form the GIY-YIG domain. The UVR domain maps to 204-239 (DEVLKTIEQKMFEASDRQAYEQAVLFRDQMQALRMI).

The protein belongs to the UvrC family. Interacts with UvrB in an incision complex.

It localises to the cytoplasm. Its function is as follows. The UvrABC repair system catalyzes the recognition and processing of DNA lesions. UvrC both incises the 5' and 3' sides of the lesion. The N-terminal half is responsible for the 3' incision and the C-terminal half is responsible for the 5' incision. In Nitrosomonas eutropha (strain DSM 101675 / C91 / Nm57), this protein is UvrABC system protein C.